A 626-amino-acid chain; its full sequence is Methanol dehydrogenase [cytochrome c] subunit 1 (626 aa).

The N-terminal stretch at 1–27 (MSRFVTSVSALAMLALAPAALSSVAYA) is a signal peptide. Cysteines 130 and 131 form a disulfide. Ca(2+)-binding residues include Glu204 and Asn288. The active-site Proton acceptor is Asp330. Cys413 and Cys442 are oxidised to a cystine.

Belongs to the bacterial PQQ dehydrogenase family. As to quaternary structure, heterotetramer composed of 2 alpha and 2 beta subunits. Requires pyrroloquinoline quinone as cofactor. It depends on Ca(2+) as a cofactor.

The protein resides in the cell inner membrane. It catalyses the reaction 2 Fe(III)-[cytochrome cL] + a primary alcohol = 2 Fe(II)-[cytochrome cL] + an aldehyde + 2 H(+). In terms of biological role, catalyzes the oxidation of primary alcohols including methanol. This Methylobacterium organophilum protein is Methanol dehydrogenase [cytochrome c] subunit 1 (moxF).